Reading from the N-terminus, the 172-residue chain is Avenin-like a4 (172 aa).

The first 19 residues, 1–19, serve as a signal peptide directing secretion; sequence MKTMFILALIALAATSVVA.

It belongs to the prolamin family. Post-translationally, contains 7 disulfide bonds.

Seed storage protein. Not integrated in the gluten polymer through disulfide bonds, unless incorporated by reduction and reoxidation during dough making. Increases dough strength and bread volume, but decreases dough stability when added into a base wheat flour. This is Avenin-like a4 from Triticum aestivum (Wheat).